The chain runs to 421 residues: Phosphoribosylamine--glycine ligase (421 aa).

An ATP-grasp domain is found at 108–314 (KEIMVKYNVP…FAQNIDDIMM (207 aa)). 134–195 (IEEQGAPIVV…EEFLDGEEFS (62 aa)) lines the ATP pocket. Mg(2+) is bound by residues glutamate 284 and asparagine 286.

Belongs to the GARS family. Requires Mg(2+) as cofactor. Mn(2+) is required as a cofactor.

It carries out the reaction 5-phospho-beta-D-ribosylamine + glycine + ATP = N(1)-(5-phospho-beta-D-ribosyl)glycinamide + ADP + phosphate + H(+). Its pathway is purine metabolism; IMP biosynthesis via de novo pathway; N(1)-(5-phospho-D-ribosyl)glycinamide from 5-phospho-alpha-D-ribose 1-diphosphate: step 2/2. In Streptococcus pyogenes serotype M3 (strain SSI-1), this protein is Phosphoribosylamine--glycine ligase.